A 230-amino-acid chain; its full sequence is MAKADLDKDPFDVASMFDDVGKNYDLTNTVLSFGQDRVWRKRTRQRLDLKPGEKVLDLAAGTAVSTVELAKSGAFCVACDFSQGMLAAGKDRDVSKVVGDGMQLPFADNSFDAVTISYGLRNIHDFRAGLKEMARVTKPGGRLTVAEFSTPVIPVFGTVYKEYLMRLLPQAARAVSSNPEAYIYLADSIRAWPSQAELAREINQNGWSDCGWQNLTFGIVALHSAIKPEN.

Residues Thr62, Asp80, 100–101 (DG), and Ser117 contribute to the S-adenosyl-L-methionine site.

This sequence belongs to the class I-like SAM-binding methyltransferase superfamily. MenG/UbiE family.

The catalysed reaction is a 2-demethylmenaquinol + S-adenosyl-L-methionine = a menaquinol + S-adenosyl-L-homocysteine + H(+). It participates in quinol/quinone metabolism; menaquinone biosynthesis; menaquinol from 1,4-dihydroxy-2-naphthoate: step 2/2. Its function is as follows. Methyltransferase required for the conversion of demethylmenaquinol (DMKH2) to menaquinol (MKH2). This chain is Demethylmenaquinone methyltransferase, found in Corynebacterium glutamicum (strain ATCC 13032 / DSM 20300 / JCM 1318 / BCRC 11384 / CCUG 27702 / LMG 3730 / NBRC 12168 / NCIMB 10025 / NRRL B-2784 / 534).